The primary structure comprises 330 residues: Bifunctional pinoresinol-lariciresinol reductase 2 (330 aa).

NADP(+)-binding positions include 28 to 34 (GGTGYLG), R53, and K62. The active-site Proton acceptor is the K156. Position 160 (R160) interacts with NADP(+). H288 provides a ligand contact to substrate.

This sequence belongs to the NmrA-type oxidoreductase family. Isoflavone reductase subfamily. Dimer. In terms of tissue distribution, expressed in leaves, stems, leaves and seeds.

The catalysed reaction is (+)-lariciresinol + NADP(+) = (+)-pinoresinol + NADPH + H(+). It carries out the reaction (-)-secoisolariciresinol + NADP(+) = (+)-lariciresinol + NADPH + H(+). Its function is as follows. Reductase involved in lignan biosynthesis. Catalyzes the enantioselective conversion of (+)-pinoresinol into (+)-lariciresinol and of (+)-lariciresinol into (-)-secoisolariciresinol. Abstracts the 4R-hydride from the NADPH cofactor during catalysis. The sequence is that of Bifunctional pinoresinol-lariciresinol reductase 2 (PLR_Lu2) from Linum usitatissimum (Flax).